We begin with the raw amino-acid sequence, 119 residues long: Phosphoribosyl-AMP cyclohydrolase (119 aa).

Asp77 serves as a coordination point for Mg(2+). Residue Cys78 participates in Zn(2+) binding. Residues Asp79 and Asp81 each contribute to the Mg(2+) site. 2 residues coordinate Zn(2+): Cys94 and Cys101.

This sequence belongs to the PRA-CH family. Homodimer. Mg(2+) serves as cofactor. Requires Zn(2+) as cofactor.

Its subcellular location is the cytoplasm. It carries out the reaction 1-(5-phospho-beta-D-ribosyl)-5'-AMP + H2O = 1-(5-phospho-beta-D-ribosyl)-5-[(5-phospho-beta-D-ribosylamino)methylideneamino]imidazole-4-carboxamide. Its pathway is amino-acid biosynthesis; L-histidine biosynthesis; L-histidine from 5-phospho-alpha-D-ribose 1-diphosphate: step 3/9. Catalyzes the hydrolysis of the adenine ring of phosphoribosyl-AMP. The chain is Phosphoribosyl-AMP cyclohydrolase from Ruegeria pomeroyi (strain ATCC 700808 / DSM 15171 / DSS-3) (Silicibacter pomeroyi).